The chain runs to 498 residues: Neoxanthin synthase, chloroplastic (498 aa).

The N-terminal 42 residues, 1-42, are a transit peptide targeting the chloroplast; it reads METLLKPFPSLLLSSPTPYRSIVQQNPSFLSPTTKKKSRKCL.

This sequence belongs to the lycopene cyclase family. As to expression, expressed exclusively in chromoplast-containing tissues of flowers and fruits. Expressed in preanthesis flowers.

It localises to the plastid. The protein localises to the chloroplast. The enzyme catalyses all-trans-violaxanthin = all-trans-neoxanthin. It carries out the reaction a carotenoid psi-end group = a carotenoid beta-end derivative. It functions in the pathway carotenoid biosynthesis; neoxanthin biosynthesis. The protein operates within carotenoid biosynthesis; beta-carotene biosynthesis. Functionally, involved in the synthesis of neoxanthin, the last product of carotenoid synthesis and a precursor of abscisic acid. Involved in the beta-carotene biosynthesis. This chain is Neoxanthin synthase, chloroplastic, found in Solanum lycopersicum (Tomato).